Consider the following 1792-residue polypeptide: MIFQSFILDNLVFLCMKIINSIVVVGLYYGFLTTFSIGPSYLFLLRARLVEEGTEKKISATTGFITGQLIMFISIYYAPLHLALGRPHIITVIALPYLLFQFFGNNHKNFLNYGYKNPNSIRNFSIQRIFFHNLIFQLLNPFFLPSSILIRLVNIYLFRCNNKFIFLISSFIGWIIGHTFFMKWIEFILVRIQQTNSIKSNVRIQSNKYIMSEFRNSMLKIFLVFLFITCLYYLGRVPPPFFSKKLSEIQETHEIYKKGKKIDVEKNLQRVQTKQKQKRSNNKEGFLSLFSKNENNLYKIDEEKYKLGFVKKPLVNILFNYKRWNRPFRYIKNNRFENVVKNEISEFFFHTCQSDGKERISFMYPPNLSTFHKMMETKFYLFTKDKISYDELSNYWSYTNEEKRNKLSNEFVNRAKVMDKELISLDILENRIRLSNDETKTKYLTKIYDPFLNGRFRGQIENVFSTSIQYEKNEKKNTILINKIHGILISNNTYKKNNSNYPELEKKINIFDRKSLVTTFFFFNLISKFSKKLVSSLSFETLSLFPEHEQVKINYEEEKKQIIKILFDAIRTDLNEKTIVNGNRTKCIRINEIRKKVPRWSYKFIDELEQLEGKNEAENYQIRSRKAKRVVILTNKSKFFKKYDTYNPTGDTDNAEKKKNELALIRYSQQSDFRRDIIKGSIRAQRRKTVTWKFFQKRVHSPLFLDKIEKPLFFSFDSFKSMKIFFMFKIWMRKKEEFEISSYTEERAKESSKKEEEKKKENEERKRIEIAEAWDSIIFAQVIRGILLITQSILRKYILLPSLIITKNIARILFFQFPEWSEDFRDWKREMYIKCTYNGVQLSEREFPKKWLTDGIQIKILFPFRLKPWHKSKLRSNEKKKDLMKKKNFCFLTVWGMEVDLPFSGSPQKNRFSSFFDPIFKELKKKTKQFQFFTFRVLKVLSEKLKLFLTILIEKAKRISKSIIESILKSILKSILSLTKIKQFFKLLFIKFKFKKIDELSENKKDSTIYKNNPMISETTISIQSINSVNCSLKKKKIKDLNAKRKAVIKKIEKIKKGLVISETNIHSNKTTYDSKRVEFEKKKLQILQRRRNARLTRKSHSFFKFFMKRIYRDIFLYISCIPRINIQLFLELTKKFLNKSIYDNEANAERIYKTNQSIIRFISILHKYFHTRNPNSHNSCDISFLSQAYVFFNLLHTRIININIYKLRSVFQYHGIFFFLKNEIKDSFFGAQGIFHYKLKHNNPLNSVRNQWTNWLKDHYYQYDLSKSRWSRLVPQKWRNRITEYRIAQNKDLTKCNSYEKSQLILYKEQQVNALKKKIRKQYRYDLLSYNFINYADKKDSYIYGYRSLFQVKKNQVISSNYNTYKKELFDIIDNLFIKNYISEDAILDMEKNLYRKYFDWMGINREILNRSISNPEFWFFSKFVIFYDAYRGNSQVIPIKLLFFSSNVNQNVSENKKNITRKKKNESLELELETRNRAKAEYPDQRNLESSISNQEKDIENDYVGSDSEKNSKGIKKKKDKNKMEAELNFLLRNFLILHLNWNNFLGQRIFNNVKVYCLLIRLKNLREITIASIQRGELGLDIMMIQNQKNLILLGLRKKKNNKFMKKEIFVIEPVRLSRKNNKQFFMYQTIGLSLIQKNKRKIYHKYPEKIHVNKKNFYKYITRTRDQKITEKKEKDNSDLLVPENILSARRRRELRILICLNPNNINSMHRNTIFYNPNKVQNGFPLLTKKRKYFEKDKKKLMNFKIFLWPKYRLEDLACINRYWFNTHNGSRFSIVRIHMYPRMKIR.

6 helical membrane-spanning segments follow: residues 18-38 (IINSIVVVGLYYGFLTTFSIG), 64-84 (FITGQLIMFISIYYAPLHLAL), 87-107 (PHIITVIALPYLLFQFFGNNH), 129-149 (IFFHNLIFQLLNPFFLPSSIL), 165-185 (IFLISSFIGWIIGHTFFMKWI), and 221-241 (IFLVFLFITCLYYLGRVPPPF).

The protein belongs to the TIC214 family. As to quaternary structure, part of the Tic complex.

The protein localises to the plastid. It localises to the chloroplast inner membrane. Involved in protein precursor import into chloroplasts. May be part of an intermediate translocation complex acting as a protein-conducting channel at the inner envelope. The protein is Protein TIC 214 of Glycine max (Soybean).